The chain runs to 282 residues: NAD(P)H-hydrate epimerase (282 aa).

The N-terminal 53 residues, 1-53 (MSGLRTLLGLGLLVAGSRLPRVISQQSVCRARPIWWGTQRRGSETMAGAAVKY), are a transit peptide targeting the mitochondrion. Residue S43 is modified to Phosphoserine; by PKA. A YjeF N-terminal domain is found at 59 to 269 (AQAVDQELFN…ALEKKYQLNL (211 aa)). 113-117 (NNGGD) is a binding site for (6S)-NADPHX. N114 is a binding site for K(+). Position 138 is an N6-succinyllysine (K138). D179 is a binding site for K(+). Residues 183-189 (GFSFKGD) and D212 contribute to the (6S)-NADPHX site. S215 contributes to the K(+) binding site.

Belongs to the NnrE/AIBP family. Homodimer. Interacts with APOA1 and APOA2. Requires K(+) as cofactor. Undergoes physiological phosphorylation during sperm capacitation, downstream to PKA activation. Detected in testis and sperm (at protein level). Expressed at high levels in heart, liver, kidney, and testis.

It localises to the mitochondrion. The protein resides in the secreted. The catalysed reaction is (6R)-NADHX = (6S)-NADHX. The enzyme catalyses (6R)-NADPHX = (6S)-NADPHX. In terms of biological role, catalyzes the epimerization of the S- and R-forms of NAD(P)HX, a damaged form of NAD(P)H that is a result of enzymatic or heat-dependent hydration. This is a prerequisite for the S-specific NAD(P)H-hydrate dehydratase to allow the repair of both epimers of NAD(P)HX. Accelerates cholesterol efflux from endothelial cells to high-density lipoprotein (HDL) and thereby regulates angiogenesis. In Mus musculus (Mouse), this protein is NAD(P)H-hydrate epimerase.